We begin with the raw amino-acid sequence, 87 residues long: U3-theraphotoxin-Hhn1e (87 aa).

An N-terminal signal peptide occupies residues 1-24 (MVNMKASMFLTFAGLVLLFVVCYA). A propeptide spanning residues 25 to 52 (SESEEKEFPKGMLSSIFAVDNDFKQEER) is cleaved from the precursor. Cystine bridges form between Cys54–Cys67, Cys61–Cys72, and Cys66–Cys79.

It belongs to the neurotoxin 10 (Hwtx-1) family. 51 (Hntx-8) subfamily. Hntx-8 sub-subfamily. Expressed by the venom gland.

Its subcellular location is the secreted. Functionally, ion channel inhibitor. This is U3-theraphotoxin-Hhn1e from Cyriopagopus hainanus (Chinese bird spider).